The following is a 1417-amino-acid chain: Non-structural polyprotein 1AB (1417 aa).

Positions 105-143 form a coiled coil; the sequence is KLIHKANALQERLRLSQEEKATLALDVQFLQHENVRLKE. 5 helical membrane passes run 155–175, 240–260, 287–307, 314–334, and 345–365; these read MKWI…GGYA, VFYY…LAIG, VLPT…TLMV, LLAI…LCFM, and GLIA…LTGT. Residues His462, Asp490, and Ser552 each act as charge relay system; for serine protease activity in the active site. Residues 588–615 are a coiled coil; sequence VKAPSQVELLKEEIERLKAQLNSAAENP. At Tyr694 the chain carries O-(5'-phospho-RNA)-tyrosine. Positions 753–813 are disordered; sequence NFDQAKPTPA…QKIEPQPYSQ (61 aa). Over residues 784–796 the composition is skewed to basic and acidic residues; sequence SQKKEKQPEHEQQ. In terms of domain architecture, RdRp catalytic spans 1162-1288; sequence KHFIEFDWTR…TTPSVPDNYE (127 aa).

It belongs to the astroviridae polyprotein 1AB family. Monomer. Cleaved by the viral and host proteases. The protease is probably autocatalytically cleaved.

The protein localises to the host membrane. It carries out the reaction RNA(n) + a ribonucleoside 5'-triphosphate = RNA(n+1) + diphosphate. In terms of biological role, responsible for the cleavage of the polyprotein into functional products. Functionally, protein covalently attached to the 5' extremity of the genomic and subgenomic RNAs. It may serve as a primer for the replicase. The sequence is that of Non-structural polyprotein 1AB (ORF1) from Human astrovirus-8 (HAstV-8).